The primary structure comprises 276 residues: C-type lectin domain family 12 member B (276 aa).

Topologically, residues 1–43 (MSEDMTYATLTFQDSVAAGNNQDRNNLRKRGYPAPSSIWRQAA) are cytoplasmic. Positions 5 to 10 (MTYATL) match the ITIM motif motif. Tyr7 carries the post-translational modification Phosphotyrosine. A helical; Signal-anchor for type II membrane protein membrane pass occupies residues 44–64 (LGLLTLCVMLLIGLVTLGIMF). Over 65–276 (LQMSSEINSD…AALVKIEDLD (212 aa)) the chain is Extracellular. Residues Asn91, Asn176, and Asn237 are each glycosylated (N-linked (GlcNAc...) asparagine). Positions 150-264 (YQTSCYYFAV…CSAEISWICE (115 aa)) constitute a C-type lectin domain. Disulfide bonds link Cys172–Cys263 and Cys242–Cys255.

Homodimer. Interacts (via ITIM motif) with PTPN6. Interacts (via ITIM motif) with PTPN11; this interaction triggers dephosphorylation and activation of PTPN11.

It localises to the cell membrane. In terms of biological role, inhibitory receptor postulated to negatively regulate immune and non-immune functions. Upon phosphorylation, recruits SH2 domain-containing PTPN6 and PTPN11 phosphatases to its ITIM motif and antagonizes activation signals. Although it inhibits KLRK1/NKG2D-mediated signaling, it does not bind known ligands of KLRK1/NKG2D and therefore is not its inhibitory counterpart. May limit activation of myeloid cell subsets in response to infection or tissue inflammation. May protect target cells against natural killer cell-mediated lysis. May negatively regulate cell cycle and differentiation of melanocytes via inactivation of STAT3. The sequence is that of C-type lectin domain family 12 member B (CLEC12B) from Bos taurus (Bovine).